The sequence spans 834 residues: Sodium/hydrogen exchanger 3 (834 aa).

Residues 1-25 (MWGLGARGPDRGLLLALALGGLARA) form the signal peptide. Over 26–51 (GGVEVEPGGAHGESGGFQVVTFEWAH) the chain is Extracellular. Residues 52 to 74 (VQDPYVIALWILVASLAKIGFHL) traverse the membrane as a helical segment. At 75-82 (SHKVTSVV) the chain is on the cytoplasmic side. Residues 83–102 (PESALLIVLGLVLGGIVWAA) traverse the membrane as a helical segment. The Extracellular portion of the chain corresponds to 103–111 (DHIASFTLT). The helical transmembrane segment at 112–129 (PTVFFFYLLPPIVLDAGY) threads the bilayer. The Cytoplasmic segment spans residues 130–132 (FMP). A helical transmembrane segment spans residues 133-168 (NRLFFGNLGTILLYAVVGTVWNAATTGLSLYGVFLS). The a 1,2-diacyl-sn-glycero-3-phospho-(1D-myo-inositol) site is built by Gly138, Gly141, and Thr142. Over 169–181 (GLMGDLQIGLLDF) the chain is Extracellular. Residues 182–203 (LLFGSLMAAVDPVAVLAVFEEV) traverse the membrane as a helical segment. Over 204–205 (HV) the chain is Cytoplasmic. A helical membrane pass occupies residues 206–237 (NEVLFIIVFGESLLNDAVTVVLYNVFESFVAL). The Extracellular portion of the chain corresponds to 238 to 244 (GGDNVTG). The N-linked (GlcNAc...) asparagine glycan is linked to Asn241. A helical transmembrane segment spans residues 245 to 279 (VDCVKGIVSFFVVSLGGTLVGVVFAFLLSLVTRFT). Over 280–281 (KH) the chain is Cytoplasmic. The chain crosses the membrane as a helical span at residues 282 to 304 (VRIIEPGFVFIISYLSYLTSEML). Residues 305 to 306 (SL) lie on the Extracellular side of the membrane. A helical membrane pass occupies residues 307–323 (SAILAITFCGICCQKYV). Residues 324 to 330 (KANISEQ) are Cytoplasmic-facing. Residues 331–359 (SATTVRYTMKMLASSAETIIFMFLGISAV) form a helical membrane-spanning segment. Over 360–367 (NPFIWTWN) the chain is Extracellular. The helical transmembrane segment at 368–389 (TAFVLLTLVFISVYRAIGVVLQ) threads the bilayer. At 390 to 402 (TWLLNRYRMVQLE) the chain is on the cytoplasmic side. Residue Met398 participates in a 1,2-diacyl-sn-glycero-3-phospho-(1D-myo-inositol) binding. The chain crosses the membrane as a helical span at residues 403–426 (PIDQVVLSYGGLRGAVAFALVVLL). Topologically, residues 427 to 433 (DGDKVKE) are extracellular. A helical transmembrane segment spans residues 434–467 (KNLFVSTTIIVVFFTVIFQGLTIKPLVQWLKVKR). Topologically, residues 468 to 834 (SEHREPRLNE…PAALPESTHM (367 aa)) are cytoplasmic. Positions 497, 498, and 500 each coordinate a 1,2-diacyl-sn-glycero-3-phospho-(1D-myo-inositol). 2 positions are modified to phosphoserine: Ser555 and Ser563. The interaction with EZR stretch occupies residues 575 to 589 (RSSTVEASVSYLLRE). Residues 590–667 (NVSAVCLDMQ…RKRLESFKST (78 aa)) are interaction with NHERF4. The tract at residues 591–695 (VSAVCLDMQS…AQKRRNSSIP (105 aa)) is interaction with AHCYL1. Residues Ser592 and Ser607 each carry the phosphoserine modification. At Ser663 the chain carries Phosphoserine; by SGK1. Positions 679-691 (KLYKRERAQKRRN) are enriched in basic residues. The tract at residues 679 to 728 (KLYKRERAQKRRNSSIPNGKLPMESPAQNFTIKEKDLELSDTEEPPNYDE) is disordered. A compositionally biased stretch (acidic residues) spans 717-728 (LSDTEEPPNYDE). Ser718, Ser810, and Ser813 each carry phosphoserine. A disordered region spans residues 814-834 (FLQADGPEERPPAALPESTHM).

This sequence belongs to the monovalent cation:proton antiporter 1 (CPA1) transporter (TC 2.A.36) family. In terms of assembly, homodimer. Found in the forms of complex and dynamic macromolecular complexes. Binds NHERF1 and NHERF2. Interacts with CHP1; increases SLC9A3 trafficking and activity at the plasma membrane. Interacts with CHP2 and SHANK2. Interacts with PDZK1 (via C-terminal PDZ domain). Interacts with NHERF4 and interaction decrease in response to elevated calcium ion levels. Interacts with AHCYL1; the interaction is required for SLC9A3 activity. Interacts with SNX27 (via PDZ domains); directs SLC9A3 membrane insertion from early endosomes to the plasma membrane. Interacts with EZR; interaction targets SLC9A3 to the apical membrane. Phosphorylated by PKA, which inhibits activity. Phosphorylation at Ser-663 by SGK1 is associated with increased abundance at the cell membrane. Phosphorylation at Ser-718 by CSNK2A1 regulates SLC9A3 activity through the formation of multiple signaling complexes.

Its subcellular location is the apical cell membrane. The protein localises to the cell membrane. It localises to the recycling endosome membrane. It is found in the early endosome membrane. The catalysed reaction is Na(+)(in) + H(+)(out) = Na(+)(out) + H(+)(in). Its activity is regulated as follows. Seems to switch between active and inactive modes in response to various stimuli. Activated directly or indirectly by membrane phosphatidylinositol (PIs). Regulated by a variety of auxiliary proteins, which facilitate the maturation, cell surface expression and function of the transporter. Inhibited specifically by the drug tenapanor. Its function is as follows. Plasma membrane Na(+)/H(+) antiporter. Exchanges intracellular H(+) ions for extracellular Na(+) in 1:1 stoichiometry, playing a key role in salt and fluid absorption and pH homeostasis. Major apical Na(+)/H(+) exchanger in kidney and intestine playing an important role in renal and intestine Na(+) absorption and blood pressure regulation. This Homo sapiens (Human) protein is Sodium/hydrogen exchanger 3.